Here is a 310-residue protein sequence, read N- to C-terminus: Probable manganese-dependent inorganic pyrophosphatase (310 aa).

The Mn(2+) site is built by His-9, Asp-13, Asp-15, Asp-76, His-98, and Asp-150.

Belongs to the PPase class C family. As to quaternary structure, homodimer. Mn(2+) is required as a cofactor.

The protein localises to the cytoplasm. The catalysed reaction is diphosphate + H2O = 2 phosphate + H(+). The chain is Probable manganese-dependent inorganic pyrophosphatase (ppaC) from Streptococcus mutans serotype c (strain ATCC 700610 / UA159).